A 192-amino-acid polypeptide reads, in one-letter code: Pyridoxal 5'-phosphate synthase subunit PdxT (192 aa).

Residue Gly-46 to Ser-48 coordinates L-glutamine. Residue Cys-77 is the Nucleophile of the active site. L-glutamine contacts are provided by residues Arg-103 and Ile-131 to Arg-132. Residues His-167 and Glu-169 each act as charge relay system in the active site.

The protein belongs to the glutaminase PdxT/SNO family. In terms of assembly, in the presence of PdxS, forms a dodecamer of heterodimers. Only shows activity in the heterodimer.

The catalysed reaction is aldehydo-D-ribose 5-phosphate + D-glyceraldehyde 3-phosphate + L-glutamine = pyridoxal 5'-phosphate + L-glutamate + phosphate + 3 H2O + H(+). It carries out the reaction L-glutamine + H2O = L-glutamate + NH4(+). It functions in the pathway cofactor biosynthesis; pyridoxal 5'-phosphate biosynthesis. In terms of biological role, catalyzes the hydrolysis of glutamine to glutamate and ammonia as part of the biosynthesis of pyridoxal 5'-phosphate. The resulting ammonia molecule is channeled to the active site of PdxS. The polypeptide is Pyridoxal 5'-phosphate synthase subunit PdxT (Exiguobacterium sibiricum (strain DSM 17290 / CCUG 55495 / CIP 109462 / JCM 13490 / 255-15)).